Reading from the N-terminus, the 438-residue chain is Polycomb protein eed-A (438 aa).

The segment at 1–67 (MSEASGRAAG…NAPGRKAWGK (67 aa)) is disordered. Polar residues predominate over residues 40–57 (SIESGTNTERPDTPTNAA). 7 WD repeats span residues 88-131 (DHNQ…DIRL), 139-182 (DADE…CIKH), 185-225 (GHGN…LVAI), 231-270 (GHRDEVLSADYDLLGEKIMSCGMDHSLKLWRINSLRMKTA), 301-338 (IHRNYVDCVRWLGDLILSKSCENAIVCWKPGKMEDDID), 356-396 (SQCD…PHKA), and 405-438 (KCASAVRQTSFSRDSSILVAVCDDATIWRWDRLR).

Belongs to the WD repeat ESC family. Component of the prc2/eed-ezh2 complex. Interacts with yy1. Can interact with ezh2, hdac1 and taf9.

The protein resides in the nucleus. Its function is as follows. Polycomb group (PcG) protein. Component of the prc2/eed-ezh2 complex, which methylates 'Lys-9' and 'Lys-27' of histone H3, leading to transcriptional repression of the affected target gene. This Xenopus laevis (African clawed frog) protein is Polycomb protein eed-A (eed-a).